Consider the following 219-residue polypeptide: 16S rRNA (adenine(1408)-N(1))-methyltransferase (219 aa).

S-adenosyl-L-methionine-binding positions include glycine 32, asparagine 38, aspartate 55, 87–88 (AE), 104–109 (LFPWGT), and 195–197 (SLW).

It belongs to the methyltransferase superfamily. Kanamycin-apramycin resistance family.

It carries out the reaction adenosine(1408) in 16S rRNA + S-adenosyl-L-methionine = N(1)-methyladenosine(1408) in 16S rRNA + S-adenosyl-L-homocysteine + H(+). Functionally, specifically methylates the N(1) position of adenine 1408 in 16S rRNA. Confers resistance to various aminoglycosides, including kanamycin, neomycin, apramycin, ribostamycin and gentamicin. Methylates only fully assembled 30S subunits. The chain is 16S rRNA (adenine(1408)-N(1))-methyltransferase (npmA) from Escherichia coli.